The following is a 510-amino-acid chain: L-2,4-diaminobutyrate decarboxylase (510 aa).

K319 is subject to N6-(pyridoxal phosphate)lysine.

It belongs to the group II decarboxylase family. It depends on pyridoxal 5'-phosphate as a cofactor.

The catalysed reaction is L-2,4-diaminobutanoate + H(+) = propane-1,3-diamine + CO2. It functions in the pathway amine and polyamine biosynthesis; 1,3-diaminopropane biosynthesis; 1,3-diaminopropane from L-aspartate 4-semialdehyde: step 2/2. The chain is L-2,4-diaminobutyrate decarboxylase (ddc) from Acinetobacter baumannii.